Reading from the N-terminus, the 438-residue chain is Chromosomal replication initiator protein DnaA (438 aa).

The domain I, interacts with DnaA modulators stretch occupies residues 1–68 (MKDNILSALK…VVKESLGKDA (68 aa)). Positions 68-98 (ATFEIVYKEIDITQENEEKGPLVRKRPLLIT) are domain II. The segment at 99-314 (PLNPKYTFEN…GAILKLIAYK (216 aa)) is domain III, AAA+ region. ATP contacts are provided by Gly142, Gly144, Lys145, and Thr146. Residues 315–438 (NLYGSLNLSI…TKNFAQGESI (124 aa)) are domain IV, binds dsDNA.

Belongs to the DnaA family. In terms of assembly, oligomerizes as a right-handed, spiral filament on DNA at oriC.

It localises to the cytoplasm. In terms of biological role, plays an essential role in the initiation and regulation of chromosomal replication. ATP-DnaA binds to the origin of replication (oriC) to initiate formation of the DNA replication initiation complex once per cell cycle. Binds the DnaA box (a 9 base pair repeat at the origin) and separates the double-stranded (ds)DNA. Forms a right-handed helical filament on oriC DNA; dsDNA binds to the exterior of the filament while single-stranded (ss)DNA is stabiized in the filament's interior. The ATP-DnaA-oriC complex binds and stabilizes one strand of the AT-rich DNA unwinding element (DUE), permitting loading of DNA polymerase. After initiation quickly degrades to an ADP-DnaA complex that is not apt for DNA replication. Binds acidic phospholipids. The polypeptide is Chromosomal replication initiator protein DnaA (Thermosipho africanus (strain TCF52B)).